Reading from the N-terminus, the 404-residue chain is Cysteine desulfurase IscS (404 aa).

Residues 75–76, Asn-155, Gln-183, and 203–205 contribute to the pyridoxal 5'-phosphate site; these read AT and SAH. Lys-206 is modified (N6-(pyridoxal phosphate)lysine). Thr-243 lines the pyridoxal 5'-phosphate pocket. Cys-328 (cysteine persulfide intermediate) is an active-site residue. A [2Fe-2S] cluster-binding site is contributed by Cys-328.

This sequence belongs to the class-V pyridoxal-phosphate-dependent aminotransferase family. NifS/IscS subfamily. As to quaternary structure, homodimer. Forms a heterotetramer with IscU, interacts with other sulfur acceptors. The cofactor is pyridoxal 5'-phosphate.

It localises to the cytoplasm. The catalysed reaction is (sulfur carrier)-H + L-cysteine = (sulfur carrier)-SH + L-alanine. It participates in cofactor biosynthesis; iron-sulfur cluster biosynthesis. Master enzyme that delivers sulfur to a number of partners involved in Fe-S cluster assembly, tRNA modification or cofactor biosynthesis. Catalyzes the removal of elemental sulfur atoms from cysteine to produce alanine. Functions as a sulfur delivery protein for Fe-S cluster synthesis onto IscU, an Fe-S scaffold assembly protein, as well as other S acceptor proteins. This Pseudomonas entomophila (strain L48) protein is Cysteine desulfurase IscS.